Reading from the N-terminus, the 249-residue chain is ATP synthase subunit a, chloroplastic (249 aa).

5 helical membrane passes run 40–60 (QVLI…VLVV), 97–117 (VPFI…GALL), 136–156 (INTT…AGLS), 201–221 (LVVV…VMFL), and 222–242 (GLFT…AYIG).

The protein belongs to the ATPase A chain family. In terms of assembly, F-type ATPases have 2 components, CF(1) - the catalytic core - and CF(0) - the membrane proton channel. CF(1) has five subunits: alpha(3), beta(3), gamma(1), delta(1), epsilon(1). CF(0) has four main subunits: a, b, b' and c.

The protein resides in the plastid. The protein localises to the chloroplast thylakoid membrane. Key component of the proton channel; it plays a direct role in the translocation of protons across the membrane. The chain is ATP synthase subunit a, chloroplastic from Aethionema grandiflorum (Persian stone-cress).